Consider the following 421-residue polypeptide: AP-3 complex subunit mu (421 aa).

The region spanning 178 to 420 (QNKIFFDIIE…TTKAGKFQVR (243 aa)) is the MHD domain.

This sequence belongs to the adaptor complexes medium subunit family. As to quaternary structure, adaptor protein complex 3 (AP-3) is a heterotetramer composed of two large adaptins (delta-type subunit and beta-type subunit), a medium adaptin (mu-type subunit) and a small adaptin (sigma-type subunit).

The protein resides in the endosome membrane. Functionally, part of the AP-3 complex, an adaptor-related complex which is essential for the compartmentalization of the endocytic pathway. The chain is AP-3 complex subunit mu (apm3) from Dictyostelium discoideum (Social amoeba).